Consider the following 160-residue polypeptide: RNA pyrophosphohydrolase (160 aa).

The Nudix hydrolase domain occupies Pro10–Asp154. Positions Gly44–Gly65 match the Nudix box motif.

Belongs to the Nudix hydrolase family. RppH subfamily. A divalent metal cation is required as a cofactor.

Its function is as follows. Accelerates the degradation of transcripts by removing pyrophosphate from the 5'-end of triphosphorylated RNA, leading to a more labile monophosphorylated state that can stimulate subsequent ribonuclease cleavage. The chain is RNA pyrophosphohydrolase from Dinoroseobacter shibae (strain DSM 16493 / NCIMB 14021 / DFL 12).